Here is a 593-residue protein sequence, read N- to C-terminus: Immunoglobulin G-binding protein G (593 aa).

The N-terminal stretch at Met-1–Ala-33 is a signal peptide. 5 repeat units span residues Leu-104–Leu-140, Leu-179–Leu-215, Leu-254–Leu-290, Thr-303–Glu-357, and Thr-373–Glu-427. A 3 X 37 AA repeats region spans residues Leu-104–Leu-290. The 2 X 55 AA repeats stretch occupies residues Thr-303–Glu-427. Positions Pro-503–Asn-567 are disordered. Residues Ala-529 to Glu-557 show a composition bias toward basic and acidic residues. Residues Asp-531–Lys-555 are 5 X 5 AA repeats of [DE]-D-A-K-K. The LPXTG sorting signal motif lies at Leu-559 to Gly-563. Thr-562 is modified (pentaglycyl murein peptidoglycan amidated threonine). Residues Gly-563 to Asp-593 constitute a propeptide, removed by sortase.

It localises to the secreted. The protein resides in the cell wall. The sequence is that of Immunoglobulin G-binding protein G (spg) from Streptococcus sp. group G.